The chain runs to 178 residues: Glucagon-2 (178 aa).

The first 21 residues, 1 to 21 (MFGIHSLAGVLLLVIVQSQLA), serve as a signal peptide directing secretion. 3 consecutive propeptides follow at residues 83–87 (SGAPS), 123–134 (ESAEESMNGPMS), and 171–178 (SNKRQEDH).

Belongs to the glucagon family.

It localises to the secreted. Functionally, promotes hydrolysis of glycogen and lipids, and raises the blood sugar level. The protein is Glucagon-2 (gcg2) of Oncorhynchus mykiss (Rainbow trout).